A 265-amino-acid polypeptide reads, in one-letter code: Zwei Ig domain protein zig-1 (265 aa).

A signal peptide spans 1 to 17 (MKNLLLITFFVVSTVTA). At 18–232 (LGGRGSKSAL…KMVDVRSEFQ (215 aa)) the chain is on the extracellular side. Ig-like C2-type domains lie at 41–108 (HATD…TPHG) and 120–220 (PVVH…MLLV). Asn-83 and Asn-193 each carry an N-linked (GlcNAc...) asparagine glycan. Cysteines 155 and 202 form a disulfide. A helical membrane pass occupies residues 233–253 (WVYPLAVILITIFLLVVIIVF). At 254–265 (CEWRNKKSTSKA) the chain is on the cytoplasmic side.

Expressed in neurons and body wall muscles.

The protein resides in the cell membrane. In terms of biological role, probably not involved in maintaining the position of ASI and ASH head neuron cell bodies and ventral nerve cord axons of PVQ, PVP, RMEV, AVK and HSN neurons. The polypeptide is Zwei Ig domain protein zig-1 (Caenorhabditis elegans).